A 234-amino-acid chain; its full sequence is Sugar fermentation stimulation protein homolog (234 aa).

Belongs to the SfsA family.

The sequence is that of Sugar fermentation stimulation protein homolog from Shewanella piezotolerans (strain WP3 / JCM 13877).